The following is a 213-amino-acid chain: Pyridoxine/pyridoxamine 5'-phosphate oxidase (213 aa).

FMN is bound by residues 60-65 (RMVLMK), 75-76 (YS), lysine 82, and glutamine 104. Lysine 65 serves as a coordination point for substrate. Substrate contacts are provided by tyrosine 122 and arginine 126. FMN-binding positions include 139 to 140 (QS) and tryptophan 184. Substrate is bound at residue 190–192 (RLH). Arginine 194 is an FMN binding site.

The protein belongs to the pyridoxamine 5'-phosphate oxidase family. In terms of assembly, homodimer. It depends on FMN as a cofactor.

It catalyses the reaction pyridoxamine 5'-phosphate + O2 + H2O = pyridoxal 5'-phosphate + H2O2 + NH4(+). The enzyme catalyses pyridoxine 5'-phosphate + O2 = pyridoxal 5'-phosphate + H2O2. Its pathway is cofactor metabolism; pyridoxal 5'-phosphate salvage; pyridoxal 5'-phosphate from pyridoxamine 5'-phosphate: step 1/1. It participates in cofactor metabolism; pyridoxal 5'-phosphate salvage; pyridoxal 5'-phosphate from pyridoxine 5'-phosphate: step 1/1. In terms of biological role, catalyzes the oxidation of either pyridoxine 5'-phosphate (PNP) or pyridoxamine 5'-phosphate (PMP) into pyridoxal 5'-phosphate (PLP). The chain is Pyridoxine/pyridoxamine 5'-phosphate oxidase from Nitrobacter hamburgensis (strain DSM 10229 / NCIMB 13809 / X14).